The following is a 308-amino-acid chain: Testis-specific Y-encoded protein 1 (308 aa).

Belongs to the nucleosome assembly protein (NAP) family. Post-translationally, phosphorylated. As to expression, specifically expressed in testicular tissues. Isoform 1 and isoform 2 are expressed in spermatogonia and spermatocytes. Found in early testicular carcinoma in situ, spermatogonial cells in testicular tissues of 46,X,Y female and in prostate cancer cell lines.

It localises to the cytoplasm. The protein resides in the nucleus. Its function is as follows. May be involved in sperm differentiation and proliferation. The chain is Testis-specific Y-encoded protein 1 (TSPY1) from Homo sapiens (Human).